The primary structure comprises 124 residues: UPF0292 protein AF_0905 (124 aa).

The region spanning G21–I98 is the Toprim domain. Mg(2+)-binding residues include E27, D67, and D69.

The protein belongs to the UPF0292 family. Mg(2+) is required as a cofactor.

The chain is UPF0292 protein AF_0905 from Archaeoglobus fulgidus (strain ATCC 49558 / DSM 4304 / JCM 9628 / NBRC 100126 / VC-16).